The sequence spans 316 residues: Probable cell division protein WhiA (316 aa).

A DNA-binding region (H-T-H motif) is located at residues 275–309 (TLKELGEMVASGKISKSGINHRLRKLDEIAEQLRT).

The protein belongs to the WhiA family.

In terms of biological role, involved in cell division and chromosome segregation. In Bacillus velezensis (strain DSM 23117 / BGSC 10A6 / LMG 26770 / FZB42) (Bacillus amyloliquefaciens subsp. plantarum), this protein is Probable cell division protein WhiA.